A 321-amino-acid chain; its full sequence is Glucokinase (321 aa).

Residue 8–13 coordinates ATP; that stretch reads GDVGGT.

This sequence belongs to the bacterial glucokinase family.

It localises to the cytoplasm. It carries out the reaction D-glucose + ATP = D-glucose 6-phosphate + ADP + H(+). The protein is Glucokinase of Psychromonas ingrahamii (strain DSM 17664 / CCUG 51855 / 37).